A 350-amino-acid chain; its full sequence is Quinolinate phosphoribosyltransferase [decarboxylating] 1b (350 aa).

Substrate contacts are provided by residues Arg141, 172 to 174 (TRK), Arg196, Lys206, Glu239, Asp266, 298 to 300 (SGN), and 319 to 321 (SGA).

It belongs to the NadC/ModD family.

It carries out the reaction nicotinate beta-D-ribonucleotide + CO2 + diphosphate = quinolinate + 5-phospho-alpha-D-ribose 1-diphosphate + 2 H(+). Its pathway is alkaloid biosynthesis; nicotine biosynthesis. The protein operates within cofactor biosynthesis; NAD(+) biosynthesis; nicotinate D-ribonucleotide from quinolinate: step 1/1. Functionally, involved in the biosynthesis of pyridine alkaloid natural products, leading mainly to the production of anabasine, anatabine, nicotine and nornicotine, effective deterrents against herbivores with antiparasitic and pesticide properties (neurotoxins); nornicotine serves as the precursor in the synthesis of the carcinogen compound N'-nitrosonornicotine (NNN). Involved in the catabolism of quinolinic acid (QA). The polypeptide is Quinolinate phosphoribosyltransferase [decarboxylating] 1b (Nicotiana tabacum (Common tobacco)).